A 343-amino-acid chain; its full sequence is Phosphatidylglycerol--prolipoprotein diacylglyceryl transferase 1 (343 aa).

Transmembrane regions (helical) follow at residues 19–39 (VPLR…VWLG), 54–74 (ADIA…YHVI), 93–113 (IWEG…GAWI), and 119–139 (GVPM…AQAI). R141 contacts a 1,2-diacyl-sn-glycero-3-phospho-(1'-sn-glycerol). Helical transmembrane passes span 176–196 (HPTF…VIWA), 202–224 (LGHG…WIEY), and 238–258 (LNNW…VLSA). The disordered stretch occupies residues 269 to 343 (EPGAETAAGD…TNGADSAKKG (75 aa)). A compositionally biased stretch (basic and acidic residues) spans 283-293 (ADKDVKGTKDA). Residues 314–324 (APEDTSGADEA) are compositionally biased toward acidic residues.

It belongs to the Lgt family.

The protein localises to the cell membrane. The enzyme catalyses L-cysteinyl-[prolipoprotein] + a 1,2-diacyl-sn-glycero-3-phospho-(1'-sn-glycerol) = an S-1,2-diacyl-sn-glyceryl-L-cysteinyl-[prolipoprotein] + sn-glycerol 1-phosphate + H(+). Its pathway is protein modification; lipoprotein biosynthesis (diacylglyceryl transfer). Its function is as follows. Catalyzes the transfer of the diacylglyceryl group from phosphatidylglycerol to the sulfhydryl group of the N-terminal cysteine of a prolipoprotein, the first step in the formation of mature lipoproteins. In Streptomyces coelicolor (strain ATCC BAA-471 / A3(2) / M145), this protein is Phosphatidylglycerol--prolipoprotein diacylglyceryl transferase 1.